The primary structure comprises 258 residues: Acetylglutamate kinase (258 aa).

Residues 44-45 (GG), R66, and N158 each bind substrate. Residues 181–186 (DVSGIL) and 209–211 (IIT) each bind ATP.

It belongs to the acetylglutamate kinase family. ArgB subfamily. Homodimer.

It localises to the cytoplasm. It catalyses the reaction N-acetyl-L-glutamate + ATP = N-acetyl-L-glutamyl 5-phosphate + ADP. Its pathway is amino-acid biosynthesis; L-arginine biosynthesis; N(2)-acetyl-L-ornithine from L-glutamate: step 2/4. Catalyzes the ATP-dependent phosphorylation of N-acetyl-L-glutamate. The sequence is that of Acetylglutamate kinase from Salmonella paratyphi A (strain ATCC 9150 / SARB42).